Here is a 4912-residue protein sequence, read N- to C-terminus: Probable E3 ubiquitin-protein ligase HERC2 (4912 aa).

Residues 1-67 (MFNRQASGGA…GSGSAAPPSH (67 aa)) form a disordered region. Gly residues predominate over residues 8-17 (GGAGSSGQGA). A compositionally biased stretch (low complexity) spans 18 to 31 (GSSQTASAAPVSAG). Composition is skewed to gly residues over residues 32-41 (VGVGGGGGAS) and 49-59 (SAAGSGSGSGS). RCC1 repeat units follow at residues 634–685 (NHNA…AITC), 686–739 (GGNL…ALTS), 741–789 (GLVF…ALSS), 791–843 (GQLY…ALSS), and 844–897 (SGEV…VWTQ). Disordered regions lie at residues 1102–1129 (RLSP…STSP), 1428–1475 (QLLQ…PGRG), and 1659–1681 (QEQE…EEET). Positions 1446-1458 (SHSCHSTAGNTPT) are enriched in polar residues. The residue at position 1776 (T1776) is a Phosphothreonine. Residues 1917 to 1990 (SGPDLAKLMK…QYDLQLADSA (74 aa)) form the MIB/HERC2 domain. Disordered regions lie at residues 1994–2018 (ASPT…SHPS) and 2381–2412 (GSIY…SGSG). Over residues 2396–2412 (ESQQPGEQDQQLSSGSG) the composition is skewed to polar residues. Positions 2511-2557 (ATDAQLIGQIMEMGFTRRTVELALKQLSLQAEIMPTPEQIVQWILEH) constitute a UBA domain. The disordered stretch occupies residues 2572 to 2620 (LASSASSHDPEADSDNECPSSNSTTSSSTSSDTVEGQPMAVSGPAPPVK). Over residues 2591-2604 (SSNSTTSSSTSSDT) the composition is skewed to low complexity. In terms of domain architecture, CPH spans 2624-2699 (RKDFQTADLY…VCFVHIELVE (76 aa)). A DOC domain is found at 2780–2958 (TSATLPSLGD…FLASEYSAGV (179 aa)). RCC1 repeat units lie at residues 2985 to 3036 (PCTV…IVSQ), 3037 to 3090 (DGKV…ALTL), 3091 to 3142 (DGKV…AISS), 3144 to 3194 (GELY…TLAL), 3197 to 3248 (DGAV…ALTR), 3250 to 3300 (GEVW…AVTD), and 3302 to 3352 (GQVY…AWGL). Disordered regions lie at residues 3352–3374 (LPNA…RDPL) and 3953–4000 (LPSS…EQPD). Residues 3974-3988 (LNSTTSLSSSTVSNV) are compositionally biased toward low complexity. RCC1 repeat units follow at residues 4049 to 4099 (STIY…AVTP), 4101 to 4153 (GKLF…ALTT), 4155 to 4205 (GEVY…AITA), 4207 to 4259 (GHVL…CITD), 4261 to 4311 (DNVW…ALTK), 4313 to 4363 (GAVY…ACSD), and 4365 to 4415 (GEVY…ALST). One can recognise an HECT domain in the interval 4547-4882 (ALALPHRVWK…IHFCKSIDTD (336 aa)). C4850 (glycyl thioester intermediate) is an active-site residue. The segment at 4891-4912 (EPTEATGSEDNSDLESVASHEG) is disordered.

Its subcellular location is the cytoplasm. The protein resides in the cytoskeleton. It localises to the microtubule organizing center. It is found in the centrosome. The protein localises to the centriole. It catalyses the reaction S-ubiquitinyl-[E2 ubiquitin-conjugating enzyme]-L-cysteine + [acceptor protein]-L-lysine = [E2 ubiquitin-conjugating enzyme]-L-cysteine + N(6)-ubiquitinyl-[acceptor protein]-L-lysine.. The protein operates within protein modification; protein ubiquitination. In terms of biological role, probable E3 ubiquitin-protein ligase which accepts ubiquitin from an E2 ubiquitin-conjugating enzyme in the form of a thioester and then directly transfers the ubiquitin to targeted substrates. This chain is Probable E3 ubiquitin-protein ligase HERC2 (HERC2), found in Drosophila melanogaster (Fruit fly).